The chain runs to 301 residues: UDP-N-acetylenolpyruvoylglucosamine reductase (301 aa).

An FAD-binding PCMH-type domain is found at 24-190 (RVGGLAQFYD…VSAQLQLQPG (167 aa)). Arg-169 is a catalytic residue. The active-site Proton donor is the Ser-220. Glu-290 is an active-site residue.

It belongs to the MurB family. Requires FAD as cofactor.

It is found in the cytoplasm. The catalysed reaction is UDP-N-acetyl-alpha-D-muramate + NADP(+) = UDP-N-acetyl-3-O-(1-carboxyvinyl)-alpha-D-glucosamine + NADPH + H(+). It participates in cell wall biogenesis; peptidoglycan biosynthesis. Cell wall formation. The chain is UDP-N-acetylenolpyruvoylglucosamine reductase from Synechococcus sp. (strain ATCC 27144 / PCC 6301 / SAUG 1402/1) (Anacystis nidulans).